Here is a 338-residue protein sequence, read N- to C-terminus: UDP-3-O-acylglucosamine N-acyltransferase (338 aa).

Residue His-239 is the Proton acceptor of the active site.

Belongs to the transferase hexapeptide repeat family. LpxD subfamily. As to quaternary structure, homotrimer.

It catalyses the reaction a UDP-3-O-[(3R)-3-hydroxyacyl]-alpha-D-glucosamine + a (3R)-hydroxyacyl-[ACP] = a UDP-2-N,3-O-bis[(3R)-3-hydroxyacyl]-alpha-D-glucosamine + holo-[ACP] + H(+). Its pathway is bacterial outer membrane biogenesis; LPS lipid A biosynthesis. Its function is as follows. Catalyzes the N-acylation of UDP-3-O-acylglucosamine using 3-hydroxyacyl-ACP as the acyl donor. Is involved in the biosynthesis of lipid A, a phosphorylated glycolipid that anchors the lipopolysaccharide to the outer membrane of the cell. In Xylella fastidiosa (strain M23), this protein is UDP-3-O-acylglucosamine N-acyltransferase.